The following is a 258-amino-acid chain: tRNA pseudouridine synthase A (258 aa).

The Nucleophile role is filled by Asp52. Tyr110 contributes to the substrate binding site.

It belongs to the tRNA pseudouridine synthase TruA family. In terms of assembly, homodimer.

It carries out the reaction uridine(38/39/40) in tRNA = pseudouridine(38/39/40) in tRNA. Functionally, formation of pseudouridine at positions 38, 39 and 40 in the anticodon stem and loop of transfer RNAs. In Francisella tularensis subsp. holarctica (strain FTNF002-00 / FTA), this protein is tRNA pseudouridine synthase A.